A 471-amino-acid polypeptide reads, in one-letter code: ATP synthase subunit beta (471 aa).

Position 154–161 (154–161 (GGAGVGKT)) interacts with ATP.

Belongs to the ATPase alpha/beta chains family. As to quaternary structure, F-type ATPases have 2 components, CF(1) - the catalytic core - and CF(0) - the membrane proton channel. CF(1) has five subunits: alpha(3), beta(3), gamma(1), delta(1), epsilon(1). CF(0) has three main subunits: a(1), b(2) and c(9-12). The alpha and beta chains form an alternating ring which encloses part of the gamma chain. CF(1) is attached to CF(0) by a central stalk formed by the gamma and epsilon chains, while a peripheral stalk is formed by the delta and b chains.

Its subcellular location is the cell membrane. The enzyme catalyses ATP + H2O + 4 H(+)(in) = ADP + phosphate + 5 H(+)(out). In terms of biological role, produces ATP from ADP in the presence of a proton gradient across the membrane. The catalytic sites are hosted primarily by the beta subunits. This Mesomycoplasma hyopneumoniae (strain 232) (Mycoplasma hyopneumoniae) protein is ATP synthase subunit beta.